The following is an 88-amino-acid chain: DNA-directed RNA polymerase subunit omega (88 aa).

It belongs to the RNA polymerase subunit omega family. As to quaternary structure, the RNAP catalytic core consists of 2 alpha, 1 beta, 1 beta' and 1 omega subunit. When a sigma factor is associated with the core the holoenzyme is formed, which can initiate transcription.

The catalysed reaction is RNA(n) + a ribonucleoside 5'-triphosphate = RNA(n+1) + diphosphate. In terms of biological role, promotes RNA polymerase assembly. Latches the N- and C-terminal regions of the beta' subunit thereby facilitating its interaction with the beta and alpha subunits. This Anaeromyxobacter dehalogenans (strain 2CP-1 / ATCC BAA-258) protein is DNA-directed RNA polymerase subunit omega.